A 114-amino-acid chain; its full sequence is T cell receptor beta variable 9 (114 aa).

A signal peptide spans 1–21 (MGFRLLCCVAFCLLGAGPVDS). Residues 22–114 (GVTQTPKHLI…SALYFCASSV (93 aa)) enclose the Ig-like domain. The cysteines at positions 42 and 110 are disulfide-linked. N-linked (GlcNAc...) asparagine glycosylation occurs at N96.

Alpha-beta TR is a heterodimer composed of an alpha and beta chain; disulfide-linked. The alpha-beta TR is associated with the transmembrane signaling CD3 coreceptor proteins to form the TR-CD3 (TcR or TCR). The assembly of alpha-beta TR heterodimers with CD3 occurs in the endoplasmic reticulum where a single alpha-beta TR heterodimer associates with one CD3D-CD3E heterodimer, one CD3G-CD3E heterodimer and one CD247 homodimer forming a stable octameric structure. CD3D-CD3E and CD3G-CD3E heterodimers preferentially associate with TR alpha and TR beta chains, respectively. The association of the CD247 homodimer is the last step of TcR assembly in the endoplasmic reticulum and is required for transport to the cell surface.

Its subcellular location is the cell membrane. Its function is as follows. V region of the variable domain of T cell receptor (TR) beta chain that participates in the antigen recognition. Alpha-beta T cell receptors are antigen specific receptors which are essential to the immune response and are present on the cell surface of T lymphocytes. Recognize peptide-major histocompatibility (MH) (pMH) complexes that are displayed by antigen presenting cells (APC), a prerequisite for efficient T cell adaptive immunity against pathogens. Binding of alpha-beta TR to pMH complex initiates TR-CD3 clustering on the cell surface and intracellular activation of LCK that phosphorylates the ITAM motifs of CD3G, CD3D, CD3E and CD247 enabling the recruitment of ZAP70. In turn ZAP70 phosphorylates LAT, which recruits numerous signaling molecules to form the LAT signalosome. The LAT signalosome propagates signal branching to three major signaling pathways, the calcium, the mitogen-activated protein kinase (MAPK) kinase and the nuclear factor NF-kappa-B (NF-kB) pathways, leading to the mobilization of transcription factors that are critical for gene expression and essential for T cell growth and differentiation. The T cell repertoire is generated in the thymus, by V-(D)-J rearrangement. This repertoire is then shaped by intrathymic selection events to generate a peripheral T cell pool of self-MH restricted, non-autoaggressive T cells. Post-thymic interaction of alpha-beta TR with the pMH complexes shapes TR structural and functional avidity. This Homo sapiens (Human) protein is T cell receptor beta variable 9.